An 818-amino-acid polypeptide reads, in one-letter code: Protein TOC75-3, chloroplastic (818 aa).

The N-terminal 79 residues, 1–79 (MAAFSVNGQL…LKNLAKPLAV (79 aa)), are a transit peptide targeting the chloroplast. Residues 15–41 (TSSTASTSLSSRRKFLSPSSSRLPRIS) are compositionally biased toward low complexity. The tract at residues 15–67 (TSSTASTSLSSRRKFLSPSSSRLPRISTQSPRVPSIKCSKSLPNRDTETSSKD) is disordered. A compositionally biased stretch (basic and acidic residues) spans 57 to 67 (PNRDTETSSKD). Residues 80-140 (ASVSSAASFF…KLFSPSPAVA (61 aa)) constitute a chloroplast; outer membrane transit peptide. 3 POTRA domains span residues 141 to 246 (DEEQ…FAES), 247 to 364 (TWQS…VVEG), and 365 to 448 (DITQ…LKEL). The Chloroplast intermembrane segment spans residues 141–473 (DEEQSPDWDS…GRGGAPTLAS (333 aa)). The chain crosses the membrane as a beta stranded span at residues 474 to 482 (FQPGGSVTF). Residues 483–509 (EHRNLQGLNRSLMGSVTTSNFLNPQDD) are Cytoplasmic-facing. A beta stranded membrane pass occupies residues 510 to 518 (LSFKLEYVH). Residues 519 to 562 (PYLDGVYNPRNRTFKTSCFNSRKLSPVFTGGPGVEEVPPIWVDR) lie on the Chloroplast intermembrane side of the membrane. A beta stranded membrane pass occupies residues 563–570 (AGVKANIT). The Cytoplasmic portion of the chain corresponds to 571–578 (ENFTRQSK). Residues 579–586 (FTYGLVME) form a beta stranded membrane-spanning segment. At 587-693 (EITTRDESSH…VEQGAGKSPP (107 aa)) the chain is on the chloroplast intermembrane side. The chain crosses the membrane as a beta stranded span at residues 694-702 (PVLVLHGHY). The Cytoplasmic portion of the chain corresponds to 703–714 (GGCVGDLPSYDA). A beta stranded transmembrane segment spans residues 715–723 (FVLGGPYSV). The Chloroplast intermembrane segment spans residues 724–785 (RGYNMGELGA…VYRRTGQGSS (62 aa)). A beta stranded membrane pass occupies residues 786–792 (YGAGVKL). Over 793 to 806 (GLVRAEYAVDHNNG) the chain is Cytoplasmic. The beta stranded transmembrane segment at 807 to 814 (TGALFFRF) threads the bilayer. Topologically, residues 815–818 (GERY) are chloroplast intermembrane.

This sequence belongs to the TOC75 family. Part of the TOC core complex that includes a protein for the specific recognition of transit peptides surrounded by a ring composed of four proteins forming translocation channels, and four to five GTP-binding proteins providing energy. This core complex can interact with components of the TIC complex to form a larger import complex. Chloroplastic protein precursors such as prSS (precursor of the RuBisCO small subunit) also interact with these complexes. The TOC complex contains a specific subset of polar lipids such as digalactosyldiacylglyceride (DGDG), phosphatidylcholine (PC) and phosphatidylglycerol (PG). TOC75-3 interacts with TOC34/OEP34, TOC159/TOC86, TOC132 and TOC120. Interacts with SP1. Interacts with TIC236. Mostly expressed in young and actively dividing photosynthetic tissues and, to a lower extent, in old leaves and roots. Particularly low levels in leaves after etiolation.

Its subcellular location is the plastid. It localises to the chloroplast outer membrane. Essential protein. Mediates the insertion of proteins targeted to the outer membrane of chloroplasts. Required for the import of protein precursors into chloroplasts. Forms the voltage-dependent preprotein translocation channels (hydrophilic beta barrel) of the TOC complex in the chloroplastic outer membrane. The chain is Protein TOC75-3, chloroplastic from Arabidopsis thaliana (Mouse-ear cress).